Consider the following 109-residue polypeptide: Large ribosomal subunit protein uL22 (109 aa).

This sequence belongs to the universal ribosomal protein uL22 family. Part of the 50S ribosomal subunit.

Its function is as follows. This protein binds specifically to 23S rRNA; its binding is stimulated by other ribosomal proteins, e.g. L4, L17, and L20. It is important during the early stages of 50S assembly. It makes multiple contacts with different domains of the 23S rRNA in the assembled 50S subunit and ribosome. In terms of biological role, the globular domain of the protein is located near the polypeptide exit tunnel on the outside of the subunit, while an extended beta-hairpin is found that lines the wall of the exit tunnel in the center of the 70S ribosome. The protein is Large ribosomal subunit protein uL22 of Dechloromonas aromatica (strain RCB).